Consider the following 456-residue polypeptide: Exodeoxyribonuclease 7 large subunit (456 aa).

It belongs to the XseA family. As to quaternary structure, heterooligomer composed of large and small subunits.

It localises to the cytoplasm. The catalysed reaction is Exonucleolytic cleavage in either 5'- to 3'- or 3'- to 5'-direction to yield nucleoside 5'-phosphates.. Bidirectionally degrades single-stranded DNA into large acid-insoluble oligonucleotides, which are then degraded further into small acid-soluble oligonucleotides. The polypeptide is Exodeoxyribonuclease 7 large subunit (Escherichia coli (strain ATCC 8739 / DSM 1576 / NBRC 3972 / NCIMB 8545 / WDCM 00012 / Crooks)).